A 322-amino-acid chain; its full sequence is Atrochrysone carboxyl ACP thioesterase nsrC (322 aa).

Zn(2+) is bound by residues His105, His107, Asp109, and His110. The active-site Proton donor/acceptor is Asp109.

This sequence belongs to the metallo-beta-lactamase superfamily. It depends on Zn(2+) as a cofactor.

It catalyses the reaction atrochrysone carboxyl-[ACP] + H2O = atrochrysone carboxylate + holo-[ACP] + H(+). The protein operates within secondary metabolite biosynthesis. Its function is as follows. Atrochrysone carboxyl ACP thioesterase; part of the gene cluster that mediates the biosynthesis of the tetrahydroxanthone dimer neosartorin, which exhibits antibacterial activity. The two different monomeric units appear to be synthesized by the same set of enzymes, among which the Baeyer-Villiger monooxygenase nsrF is the key enzyme for the divergence of the biosynthetic routes. The pathway begins with the synthesis of atrochrysone thioester by the polyketide synthase nsrB. The atrochrysone carboxyl ACP thioesterase nsrC then breaks the thioester bond and releases the atrochrysone carboxylic acid from AacuL. Atrochrysone carboxylic acid is decarboxylated by the decarboxylase nsrE, and oxidized by the anthrone oxygenase nsrD to yield emodin. Emodin is then reduced to emodin hydroquinone by the oxidoreductase nsrR. A-ring reduction by the short chain dehydrogenase nsrJ, dehydration by the scytalone dehydratase-like protein nsrI and probable spontaneous re-oxidation, results in overall deoxygenation to chrysophanol. The Baeyer-Villiger monooxygenase nsrF accepts chrysophanol as a substrate to insert one oxygen atom at two different positions to yield the precursors of both monomric units. NsrF is promiscuous/flexible in interacting with the 2 (non methylated and methylated) aromatic rings of chrysophanol, thus diverging the biosynthetic pathway at this point. After the hydrolysis of the lactones, methylesterification by the methyltransferase nsrG yields respectively moniliphenone and 2,2',6'-trihydroxy-4-methyl-6-methoxya-cyldiphenylmethanone. The next steps are the hydroxylation by the FAD-dependent monooxygenase nsrK, followed by isomerization by the monooxygenase nsrQ. The short chain dehydrogenase/reductase nsrO then catalyzes the C-5 ketoreduction to give the xanthone skeleton of blennolide C and 5-acetylblennolide A. The acetyltransferase nsrL has a strict substrate specificity and uses only blennolide A but not blennolide C to yield 5-acetylblennolide A as the single-acetylated product. In the final step of the biosynthesis, the heterodimerization of the 2 xanthones, blennolide C and 5-acetylblennolide A, is catalyzed by the cytochrome P450 monooxygenase nsrP. NsrP can utilize at least three different xanthones as its substrates to perform the dimerization reaction. This Aspergillus novofumigatus (strain IBT 16806) protein is Atrochrysone carboxyl ACP thioesterase nsrC.